We begin with the raw amino-acid sequence, 605 residues long: MLWIWVPGILGLFGRVEALWPQPSEYSHGNKTLWLSPSVRFTYTNNQRSFIYTRPSYAGINWIPGGWLNLLQNPWGSAEQTVAEPLPNVEQFVEDAIKRTKHAIINSKFVPWKFHPRHQKFEPLVDGQHPTIEEVIINEASKTSQEWSPRNYVNGDEKYEIRISEDGEVQISSRSPIGTIRALQTFQQLFYSHSHSKSYTPFAPISISDSPKWRHRGLNLDISRNVIRPEDVKRTIDAMASVKLNRLHAHAADSQSWPLDIPSIPELAAKASYHPSQVWSSSELEAVQLYGLERGVSVFLEIDLPGHTAAVGHAFPDLVAAYHMDQWEKYAAEPPSGQIKLNSSAVYQFLDLLMADLIPRVSPLTEYFHTGGDEFNLNTYLLEINLGSNDRRVLTPFLDRMITHVHSSLRSSGVTPIVWEELVLDWDLNLPSHKTAGETGGVIVQAWRNSSAVKHVLQKGYQTIFGTGDAWYLDCGVGTFLNPRPGSKAVQNPYLDWCAPTKNWKHMYVYNPLKDIPVELQSLLVGGETHMWSELVDPVNMDQMIWPRAAAAAEVLWTGPRSPDNIQDASYRLAKWRERVVNDAGIRAAMVQMTYCLMRESGCEL.

The N-terminal stretch at 1 to 18 (MLWIWVPGILGLFGRVEA) is a signal peptide. Asn-30 is a glycosylation site (N-linked (GlcNAc...) asparagine). Glu-293 acts as the Nucleophile in catalysis. Asn-342 is a glycosylation site (N-linked (GlcNAc...) asparagine). The active-site Proton donor is the Glu-374. A glycan (N-linked (GlcNAc...) asparagine) is linked at Asn-449.

This sequence belongs to the glycosyl hydrolase 20 family.

It localises to the secreted. The enzyme catalyses Hydrolysis of terminal non-reducing N-acetyl-D-hexosamine residues in N-acetyl-beta-D-hexosaminides.. Its function is as follows. Beta-hexosaminidase that shows a broad substrate specificity. The sequence is that of Beta-hexosaminidase ARB_07893 from Arthroderma benhamiae (strain ATCC MYA-4681 / CBS 112371) (Trichophyton mentagrophytes).